Here is a 1235-residue protein sequence, read N- to C-terminus: Spike glycoprotein (1235 aa).

Residues 1–13 form the signal peptide; the sequence is MLFVFILLLPSCL. Residues 1-330 are receptor binding site; that stretch reads MLFVFILLLP…RRVPNLPDCK (330 aa). Residues 14-1176 lie on the Extracellular side of the membrane; the sequence is GYIGDFRCIQ…GTYEMYVKWP (1163 aa). A BetaCoV S1-NTD domain is found at 15–296; that stretch reads YIGDFRCIQT…SYISEIKCKT (282 aa). 5 disulfide bridges follow: Cys-21-Cys-158, Cys-153-Cys-187, Cys-165-Cys-246, Cys-284-Cys-294, and Cys-329-Cys-354. Residues Asn-31, Asn-60, and Asn-134 are each glycosylated (N-linked (GlcNAc...) asparagine; by host). N-linked (GlcNAc...) asparagine; by host glycosylation occurs at Asn-192. The BetaCoV S1-CTD domain occupies 327–477; it reads PDCKIEEWLT…GINSGTTCST (151 aa). N-linked (GlcNAc...) asparagine; by host glycosylation is present at Asn-357. 2 cysteine pairs are disulfide-bonded: Cys-372–Cys-425 and Cys-384–Cys-475. 7 N-linked (GlcNAc...) asparagine; by host glycosylation sites follow: Asn-435, Asn-536, Asn-568, Asn-576, Asn-599, Asn-648, and Asn-665. Fusion peptide regions lie at residues 781-802 and 800-820; these read SAIE…VEAY and EAYN…VQSF. N-linked (GlcNAc...) asparagine; by host glycosylation is present at Asn-804. Residues Cys-805 and Cys-816 are joined by a disulfide bond. The tract at residues 881–931 is heptad repeat 1; that stretch reads QKMIASAFNNALGAIQEGFDATNSALGKIQSVVNANAEALNNLLNQLSNRF. Residues 910 to 954 adopt a coiled-coil conformation; it reads QSVVNANAEALNNLLNQLSNRFGAISASLQEILTRLDAVEAKAQI. Asn-1091, Asn-1101, Asn-1120, Asn-1136, and Asn-1157 each carry an N-linked (GlcNAc...) asparagine; by host glycan. The interval 1125–1165 is heptad repeat 2; sequence APDLSLDFEKLNVTFLDLTYEMNRIQDAIKKLNESYINLKE. A coiled-coil region spans residues 1138–1166; the sequence is TFLDLTYEMNRIQDAIKKLNESYINLKEV. Residues 1177 to 1197 traverse the membrane as a helical segment; sequence WYVWLLIGLAGVAVCVLLFFI. Over 1198–1235 the chain is Cytoplasmic; the sequence is CCCTGCGSCCFRKCGSCCDEYGGHQDSIVIHNISAHED. The KxHxx motif lies at 1231-1235; sequence SAHED.

It belongs to the betacoronaviruses spike protein family. In terms of assembly, homotrimer; each monomer consists of a S1 and a S2 subunit. The resulting peplomers protrude from the virus surface as spikes. Specific enzymatic cleavages in vivo yield mature proteins. The precursor is processed into S1 and S2 by host cell furin or another cellular protease to yield the mature S1 and S2 proteins. Additionally, a second cleavage leads to the release of a fusion peptide after viral attachment to host cell receptor. Post-translationally, the cytoplasmic Cys-rich domain is palmitoylated. Spike glycoprotein is digested within host endosomes.

The protein localises to the virion membrane. Its subcellular location is the host endoplasmic reticulum-Golgi intermediate compartment membrane. It localises to the host cell membrane. Functionally, attaches the virion to the cell membrane by interacting with host receptor, initiating the infection. Its function is as follows. Mediates fusion of the virion and cellular membranes by acting as a class I viral fusion protein. Under the current model, the protein has at least three conformational states: pre-fusion native state, pre-hairpin intermediate state, and post-fusion hairpin state. During viral and target cell membrane fusion, the coiled coil regions (heptad repeats) assume a trimer-of-hairpins structure, positioning the fusion peptide in close proximity to the C-terminal region of the ectodomain. The formation of this structure appears to drive apposition and subsequent fusion of viral and target cell membranes. In terms of biological role, acts as a viral fusion peptide which is unmasked following S2 cleavage occurring upon virus endocytosis. In Mus musculus (Mouse), this protein is Spike glycoprotein.